Consider the following 346-residue polypeptide: GTPase Obg (346 aa).

Residues 1–159 enclose the Obg domain; the sequence is MRFVDEVTFV…RELRLELQLL (159 aa). The disordered stretch occupies residues 128–148; sequence LHFKSSTNRAPRQSTEGTAGE. A compositionally biased stretch (polar residues) spans 130–144; the sequence is FKSSTNRAPRQSTEG. In terms of domain architecture, OBG-type G spans 160 to 335; sequence ADVGLLGMPN…LCGDIMNDLE (176 aa). GTP contacts are provided by residues 166 to 173, 191 to 195, 213 to 216, 285 to 288, and 316 to 318; these read GMPNVGKS, FTTLY, DIPG, NRLD, and SGL. Mg(2+) is bound by residues Ser-173 and Thr-193.

This sequence belongs to the TRAFAC class OBG-HflX-like GTPase superfamily. OBG GTPase family. As to quaternary structure, monomer. Mg(2+) serves as cofactor.

The protein resides in the cytoplasm. Functionally, an essential GTPase which binds GTP, GDP and possibly (p)ppGpp with moderate affinity, with high nucleotide exchange rates and a fairly low GTP hydrolysis rate. Plays a role in control of the cell cycle, stress response, ribosome biogenesis and in those bacteria that undergo differentiation, in morphogenesis control. The chain is GTPase Obg from Halorhodospira halophila (strain DSM 244 / SL1) (Ectothiorhodospira halophila (strain DSM 244 / SL1)).